Reading from the N-terminus, the 151-residue chain is Large ribosomal subunit protein uL15 (151 aa).

Residues 1–57 (MTLRLDSLKANKGARRRKLRKGRGIAAGQGASCGFGMRGQKSRSGRPTRPGFEGGQM) form a disordered region. Positions 12–23 (KGARRRKLRKGR) are enriched in basic residues. The span at 25–37 (IAAGQGASCGFGM) shows a compositional bias: gly residues.

It belongs to the universal ribosomal protein uL15 family. In terms of assembly, part of the 50S ribosomal subunit.

In terms of biological role, binds to the 23S rRNA. This is Large ribosomal subunit protein uL15 from Synechococcus sp. (strain CC9902).